Consider the following 126-residue polypeptide: Small ribosomal subunit protein bS6 (126 aa).

Residues 101-126 (VMMKAKEERTAKREDAAPRAEEAAAE) are disordered. Residues 104–126 (KAKEERTAKREDAAPRAEEAAAE) are compositionally biased toward basic and acidic residues.

Belongs to the bacterial ribosomal protein bS6 family.

In terms of biological role, binds together with bS18 to 16S ribosomal RNA. The polypeptide is Small ribosomal subunit protein bS6 (Aliivibrio salmonicida (strain LFI1238) (Vibrio salmonicida (strain LFI1238))).